A 566-amino-acid chain; its full sequence is Membrane protein insertase YidC (566 aa).

A helical transmembrane segment spans residues 6–26 (NLLLLALLFVSFLLYTAWVEE). The interval 30–80 (QVAPQVQTEQVDSSVPASVASSANSANLSDGVPNSPQQSSTDATSTELPAS) is disordered. Over residues 31–41 (VAPQVQTEQVD) the composition is skewed to polar residues. Residues 42 to 58 (SSVPASVASSANSANLS) show a composition bias toward low complexity. A compositionally biased stretch (polar residues) spans 61 to 80 (VPNSPQQSSTDATSTELPAS). 4 helical membrane-spanning segments follow: residues 356–376 (LLLFFQGIVGNWGVAIILITF), 433–453 (LGGCFPILLQMPIFIALYWSL), 471–491 (LSVQDPYYILPILMGVSMFFI), and 510–530 (FMPVIFTFFFLWFPAGLVLYW).

Belongs to the OXA1/ALB3/YidC family. Type 1 subfamily. In terms of assembly, interacts with the Sec translocase complex via SecD. Specifically interacts with transmembrane segments of nascent integral membrane proteins during membrane integration.

Its subcellular location is the cell inner membrane. Functionally, required for the insertion and/or proper folding and/or complex formation of integral membrane proteins into the membrane. Involved in integration of membrane proteins that insert both dependently and independently of the Sec translocase complex, as well as at least some lipoproteins. Aids folding of multispanning membrane proteins. This chain is Membrane protein insertase YidC, found in Psychromonas ingrahamii (strain DSM 17664 / CCUG 51855 / 37).